Consider the following 341-residue polypeptide: Glucokinase (341 aa).

Gly18–Thr23 serves as a coordination point for ATP.

Belongs to the bacterial glucokinase family.

It is found in the cytoplasm. It catalyses the reaction D-glucose + ATP = D-glucose 6-phosphate + ADP + H(+). The polypeptide is Glucokinase (Mesorhizobium japonicum (strain LMG 29417 / CECT 9101 / MAFF 303099) (Mesorhizobium loti (strain MAFF 303099))).